The primary structure comprises 293 residues: Shikimate dehydrogenase (NADP(+)) (293 aa).

Shikimate-binding positions include 20 to 22 (SLT) and T72. Catalysis depends on K76, which acts as the Proton acceptor. Shikimate-binding residues include N97 and D112. NADP(+) contacts are provided by residues 136–140 (GAGGA) and I230. Residue Y232 coordinates shikimate. G253 lines the NADP(+) pocket.

Belongs to the shikimate dehydrogenase family. As to quaternary structure, homodimer.

The catalysed reaction is shikimate + NADP(+) = 3-dehydroshikimate + NADPH + H(+). It functions in the pathway metabolic intermediate biosynthesis; chorismate biosynthesis; chorismate from D-erythrose 4-phosphate and phosphoenolpyruvate: step 4/7. In terms of biological role, involved in the biosynthesis of the chorismate, which leads to the biosynthesis of aromatic amino acids. Catalyzes the reversible NADPH linked reduction of 3-dehydroshikimate (DHSA) to yield shikimate (SA). The polypeptide is Shikimate dehydrogenase (NADP(+)) (Arthrobacter sp. (strain FB24)).